Here is a 92-residue protein sequence, read N- to C-terminus: Small ribosomal subunit protein bS20 (92 aa).

This sequence belongs to the bacterial ribosomal protein bS20 family.

Its function is as follows. Binds directly to 16S ribosomal RNA. The protein is Small ribosomal subunit protein bS20 of Rickettsia conorii (strain ATCC VR-613 / Malish 7).